The following is a 784-amino-acid chain: Probable phosphoketolase (784 aa).

Belongs to the XFP family. It depends on thiamine diphosphate as a cofactor.

The protein is Probable phosphoketolase of Rhodopseudomonas palustris (strain BisB5).